Here is a 360-residue protein sequence, read N- to C-terminus: UDP-N-acetylglucosamine--N-acetylmuramyl-(pentapeptide) pyrophosphoryl-undecaprenol N-acetylglucosamine transferase (360 aa).

Residues 12–14 (TGG), Asn-124, Arg-161, Ser-189, Ile-243, and Gln-288 contribute to the UDP-N-acetyl-alpha-D-glucosamine site.

The protein belongs to the glycosyltransferase 28 family. MurG subfamily.

Its subcellular location is the cell inner membrane. It catalyses the reaction di-trans,octa-cis-undecaprenyl diphospho-N-acetyl-alpha-D-muramoyl-L-alanyl-D-glutamyl-meso-2,6-diaminopimeloyl-D-alanyl-D-alanine + UDP-N-acetyl-alpha-D-glucosamine = di-trans,octa-cis-undecaprenyl diphospho-[N-acetyl-alpha-D-glucosaminyl-(1-&gt;4)]-N-acetyl-alpha-D-muramoyl-L-alanyl-D-glutamyl-meso-2,6-diaminopimeloyl-D-alanyl-D-alanine + UDP + H(+). The protein operates within cell wall biogenesis; peptidoglycan biosynthesis. Its function is as follows. Cell wall formation. Catalyzes the transfer of a GlcNAc subunit on undecaprenyl-pyrophosphoryl-MurNAc-pentapeptide (lipid intermediate I) to form undecaprenyl-pyrophosphoryl-MurNAc-(pentapeptide)GlcNAc (lipid intermediate II). This chain is UDP-N-acetylglucosamine--N-acetylmuramyl-(pentapeptide) pyrophosphoryl-undecaprenol N-acetylglucosamine transferase, found in Acidithiobacillus ferrooxidans (strain ATCC 23270 / DSM 14882 / CIP 104768 / NCIMB 8455) (Ferrobacillus ferrooxidans (strain ATCC 23270)).